Here is a 112-residue protein sequence, read N- to C-terminus: uncharacterized protein (112 aa).

This is an uncharacterized protein from Bacillus subtilis (strain 168).